The following is a 299-amino-acid chain: tRNA dimethylallyltransferase (299 aa).

Residue 13–20 coordinates ATP; the sequence is GPTASGKT. Residue 15–20 participates in substrate binding; that stretch reads TASGKT. Residues 38–41 form an interaction with substrate tRNA region; sequence DSRQ.

It belongs to the IPP transferase family. Monomer. It depends on Mg(2+) as a cofactor.

It carries out the reaction adenosine(37) in tRNA + dimethylallyl diphosphate = N(6)-dimethylallyladenosine(37) in tRNA + diphosphate. In terms of biological role, catalyzes the transfer of a dimethylallyl group onto the adenine at position 37 in tRNAs that read codons beginning with uridine, leading to the formation of N6-(dimethylallyl)adenosine (i(6)A). The sequence is that of tRNA dimethylallyltransferase from Parasynechococcus marenigrum (strain WH8102).